Reading from the N-terminus, the 167-residue chain is Protein FimG (167 aa).

A signal peptide spans 1 to 23; the sequence is MKWCKRGYVLAAILALASATIQA. Cys-39 and Cys-77 are oxidised to a cystine.

Belongs to the fimbrial protein family.

The protein localises to the fimbrium. Involved in regulation of length and mediation of adhesion of type 1 fimbriae (but not necessary for the production of fimbriae). Involved in the integration of FimH in the fimbriae. This Escherichia coli (strain K12) protein is Protein FimG (fimG).